Reading from the N-terminus, the 154-residue chain is Nascent polypeptide-associated complex subunit beta (154 aa).

Residues 34–99 form the NAC-A/B domain; sequence EQDDTKLIEA…PQEKDVTQLI (66 aa). Residues 125–154 are disordered; it reads KNPELNAGGAEGAEEDIPDLIEGQKFDDVE.

Belongs to the NAC-beta family. In terms of assembly, part of the nascent polypeptide-associated complex (NAC), consisting of EGD2 and EGD1. NAC associates with ribosomes via EGD1.

Its subcellular location is the cytoplasm. The protein resides in the nucleus. Component of the nascent polypeptide-associated complex (NAC), a dynamic component of the ribosomal exit tunnel, protecting the emerging polypeptides from interaction with other cytoplasmic proteins to ensure appropriate nascent protein targeting. The NAC complex also promotes mitochondrial protein import by enhancing productive ribosome interactions with the outer mitochondrial membrane and blocks the inappropriate interaction of ribosomes translating non-secretory nascent polypeptides with translocation sites in the membrane of the endoplasmic reticulum. EGD1 may act as a transcription factor that exert a negative effect on the expression of several genes that are transcribed by RNA polymerase II. This Debaryomyces hansenii (strain ATCC 36239 / CBS 767 / BCRC 21394 / JCM 1990 / NBRC 0083 / IGC 2968) (Yeast) protein is Nascent polypeptide-associated complex subunit beta (EGD1).